The following is a 276-amino-acid chain: NADH-cytochrome b5 reductase 2 (276 aa).

The region spanning 15–127 (EAKYPLPLIE…RGPRGRLFYH (113 aa)) is the FAD-binding FR-type domain. At K17 the chain carries N6-acetyllysine. Position 18 is a phosphotyrosine (Y18). FAD-binding positions include 107-137 (ENMK…IRPD) and 146-181 (LADH…RMSL).

It belongs to the flavoprotein pyridine nucleotide cytochrome reductase family. Requires FAD as cofactor. In terms of tissue distribution, restricted expression.

The enzyme catalyses 2 Fe(III)-[cytochrome b5] + NADH = 2 Fe(II)-[cytochrome b5] + NAD(+) + H(+). In terms of biological role, NADH-cytochrome b5 reductases are involved in desaturation and elongation of fatty acids, cholesterol biosynthesis, drug metabolism, and, in erythrocyte, methemoglobin reduction. Responsible for NADH-dependent lucigenin chemiluminescence in spermatozoa by reducing both lucigenin and 2-[4-iodophenyl]-3-[4-nitrophenyl]-5-[2,4-disulfophenyl]-2H tetrazolium monosodium salt (WST-1). The polypeptide is NADH-cytochrome b5 reductase 2 (Homo sapiens (Human)).